A 273-amino-acid polypeptide reads, in one-letter code: 4-hydroxy-tetrahydrodipicolinate reductase (273 aa).

NAD(+) contacts are provided by residues 12–17 and glutamate 38; that span reads GAGGRM. Arginine 39 serves as a coordination point for NADP(+). NAD(+)-binding positions include 102–104 and 126–129; these read GTT and AANF. Residue histidine 159 is the Proton donor/acceptor of the active site. Histidine 160 is a binding site for (S)-2,3,4,5-tetrahydrodipicolinate. Lysine 163 (proton donor) is an active-site residue. 169-170 is a binding site for (S)-2,3,4,5-tetrahydrodipicolinate; it reads GT.

This sequence belongs to the DapB family. As to quaternary structure, homotetramer.

The protein resides in the cytoplasm. It catalyses the reaction (S)-2,3,4,5-tetrahydrodipicolinate + NAD(+) + H2O = (2S,4S)-4-hydroxy-2,3,4,5-tetrahydrodipicolinate + NADH + H(+). The enzyme catalyses (S)-2,3,4,5-tetrahydrodipicolinate + NADP(+) + H2O = (2S,4S)-4-hydroxy-2,3,4,5-tetrahydrodipicolinate + NADPH + H(+). It participates in amino-acid biosynthesis; L-lysine biosynthesis via DAP pathway; (S)-tetrahydrodipicolinate from L-aspartate: step 4/4. Its function is as follows. Catalyzes the conversion of 4-hydroxy-tetrahydrodipicolinate (HTPA) to tetrahydrodipicolinate. The protein is 4-hydroxy-tetrahydrodipicolinate reductase of Shigella flexneri.